The following is a 1386-amino-acid chain: DNA-directed RNA polymerase subunit beta' (1386 aa).

Residues C75, C77, C90, and C93 each contribute to the Zn(2+) site. Residues D466, D468, and D470 each contribute to the Mg(2+) site. Zn(2+)-binding residues include C809, C883, C890, and C893.

Belongs to the RNA polymerase beta' chain family. The RNAP catalytic core consists of 2 alpha, 1 beta, 1 beta' and 1 omega subunit. When a sigma factor is associated with the core the holoenzyme is formed, which can initiate transcription. Mg(2+) serves as cofactor. It depends on Zn(2+) as a cofactor.

The catalysed reaction is RNA(n) + a ribonucleoside 5'-triphosphate = RNA(n+1) + diphosphate. Its function is as follows. DNA-dependent RNA polymerase catalyzes the transcription of DNA into RNA using the four ribonucleoside triphosphates as substrates. This chain is DNA-directed RNA polymerase subunit beta', found in Oleidesulfovibrio alaskensis (strain ATCC BAA-1058 / DSM 17464 / G20) (Desulfovibrio alaskensis).